Reading from the N-terminus, the 280-residue chain is Proteasome subunit beta 2 (280 aa).

The propeptide at 1–52 (MTERERGQGLPAEFFAVGTASFVELLSRTAPQLLPVNRVRDGSHPMPDIPHG) is removed in mature form; by autocatalysis. The active-site Nucleophile is the Thr-53.

This sequence belongs to the peptidase T1B family. As to quaternary structure, the 20S proteasome core is composed of 14 alpha and 14 beta subunits that assemble into four stacked heptameric rings, resulting in a barrel-shaped structure. The two inner rings, each composed of seven catalytic beta subunits, are sandwiched by two outer rings, each composed of seven alpha subunits. The catalytic chamber with the active sites is on the inside of the barrel. Has a gated structure, the ends of the cylinder being occluded by the N-termini of the alpha-subunits. Is capped by the proteasome-associated ATPase, ARC.

Its subcellular location is the cytoplasm. The catalysed reaction is Cleavage of peptide bonds with very broad specificity.. Its pathway is protein degradation; proteasomal Pup-dependent pathway. Its activity is regulated as follows. The formation of the proteasomal ATPase ARC-20S proteasome complex, likely via the docking of the C-termini of ARC into the intersubunit pockets in the alpha-rings, may trigger opening of the gate for substrate entry. Interconversion between the open-gate and close-gate conformations leads to a dynamic regulation of the 20S proteasome proteolysis activity. Component of the proteasome core, a large protease complex with broad specificity involved in protein degradation. This is Proteasome subunit beta 2 from Thermomonospora curvata (strain ATCC 19995 / DSM 43183 / JCM 3096 / KCTC 9072 / NBRC 15933 / NCIMB 10081 / Henssen B9).